The chain runs to 774 residues: DNA ligase 3 (774 aa).

Residues 1-25 (MPPKKRMKNGSSLKSTSKKGEKSRN) are disordered. The active-site N6-AMP-lysine intermediate is Lys433.

Belongs to the ATP-dependent DNA ligase family.

Its subcellular location is the nucleus. It catalyses the reaction ATP + (deoxyribonucleotide)n-3'-hydroxyl + 5'-phospho-(deoxyribonucleotide)m = (deoxyribonucleotide)n+m + AMP + diphosphate.. The chain is DNA ligase 3 (adl1) from Schizosaccharomyces pombe (strain 972 / ATCC 24843) (Fission yeast).